A 192-amino-acid polypeptide reads, in one-letter code: Crossover junction endodeoxyribonuclease RuvC (192 aa).

Residues aspartate 8, glutamate 67, and aspartate 139 contribute to the active site. 3 residues coordinate Mg(2+): aspartate 8, glutamate 67, and aspartate 139.

It belongs to the RuvC family. As to quaternary structure, homodimer which binds Holliday junction (HJ) DNA. The HJ becomes 2-fold symmetrical on binding to RuvC with unstacked arms; it has a different conformation from HJ DNA in complex with RuvA. In the full resolvosome a probable DNA-RuvA(4)-RuvB(12)-RuvC(2) complex forms which resolves the HJ. Requires Mg(2+) as cofactor.

It is found in the cytoplasm. It catalyses the reaction Endonucleolytic cleavage at a junction such as a reciprocal single-stranded crossover between two homologous DNA duplexes (Holliday junction).. Functionally, the RuvA-RuvB-RuvC complex processes Holliday junction (HJ) DNA during genetic recombination and DNA repair. Endonuclease that resolves HJ intermediates. Cleaves cruciform DNA by making single-stranded nicks across the HJ at symmetrical positions within the homologous arms, yielding a 5'-phosphate and a 3'-hydroxyl group; requires a central core of homology in the junction. The consensus cleavage sequence is 5'-(A/T)TT(C/G)-3'. Cleavage occurs on the 3'-side of the TT dinucleotide at the point of strand exchange. HJ branch migration catalyzed by RuvA-RuvB allows RuvC to scan DNA until it finds its consensus sequence, where it cleaves and resolves the cruciform DNA. This is Crossover junction endodeoxyribonuclease RuvC from Haemophilus ducreyi (strain 35000HP / ATCC 700724).